A 566-amino-acid polypeptide reads, in one-letter code: 3-oxosteroid 1-dehydrogenase (566 aa).

10–39 contacts FAD; that stretch reads DVVVVGSGAAGMVAALVAAHRGLSTVVVEK.

Belongs to the FAD-dependent oxidoreductase 2 family. 3-oxosteroid dehydrogenase subfamily. Requires FAD as cofactor.

It carries out the reaction a 3-oxosteroid + A = a 3-oxo-Delta(1)-steroid + AH2. The enzyme catalyses a 3-oxo-Delta(4)-steroid + A = a 3-oxo-Delta(1,4)-steroid + AH2. Its function is as follows. Involved in the degradation of cholesterol. Catalyzes the elimination of the C-1 and C-2 hydrogen atoms of the A-ring from the polycyclic ring structure of 3-ketosteroids. Is also involved in the formation of 3-keto-1,4-diene-steroid from 3-keto-4-ene-steroid. The chain is 3-oxosteroid 1-dehydrogenase (kstD) from Mycobacterium tuberculosis (strain CDC 1551 / Oshkosh).